Reading from the N-terminus, the 206-residue chain is FMN-dependent NADH:quinone oxidoreductase (206 aa).

Residues S10, 16-18 (SSS), 93-96 (MYNF), and 137-140 (TRGG) each bind FMN.

It belongs to the azoreductase type 1 family. As to quaternary structure, homodimer. FMN serves as cofactor.

The enzyme catalyses 2 a quinone + NADH + H(+) = 2 a 1,4-benzosemiquinone + NAD(+). It catalyses the reaction N,N-dimethyl-1,4-phenylenediamine + anthranilate + 2 NAD(+) = 2-(4-dimethylaminophenyl)diazenylbenzoate + 2 NADH + 2 H(+). Its function is as follows. Quinone reductase that provides resistance to thiol-specific stress caused by electrophilic quinones. In terms of biological role, also exhibits azoreductase activity. Catalyzes the reductive cleavage of the azo bond in aromatic azo compounds to the corresponding amines. This is FMN-dependent NADH:quinone oxidoreductase from Psychromonas ingrahamii (strain DSM 17664 / CCUG 51855 / 37).